A 545-amino-acid polypeptide reads, in one-letter code: Coiled-coil domain-containing protein 60 (545 aa).

A coiled-coil region spans residues asparagine 72–glutamine 99. Residues proline 224–glutamate 284 form a disordered region. Low complexity predominate over residues arginine 238–serine 259.

The chain is Coiled-coil domain-containing protein 60 (Ccdc60) from Mus musculus (Mouse).